We begin with the raw amino-acid sequence, 349 residues long: tRNA pseudouridine synthase D (349 aa).

F26 serves as a coordination point for substrate. The active-site Nucleophile is the D79. A substrate-binding site is contributed by N128. In terms of domain architecture, TRUD spans G154–L302. F328 is a substrate binding site.

This sequence belongs to the pseudouridine synthase TruD family.

The catalysed reaction is uridine(13) in tRNA = pseudouridine(13) in tRNA. In terms of biological role, responsible for synthesis of pseudouridine from uracil-13 in transfer RNAs. This is tRNA pseudouridine synthase D from Yersinia enterocolitica serotype O:8 / biotype 1B (strain NCTC 13174 / 8081).